We begin with the raw amino-acid sequence, 1232 residues long: DNA-directed RNA polymerase subunit beta (1232 aa).

A disordered region spans residues 1170-1232 (SVDEDADELE…LDLDDFGDEH (63 aa)). Acidic residues predominate over residues 1171–1180 (VDEDADELEV). The span at 1189–1198 (PEEKEEKEKE) shows a compositional bias: basic and acidic residues. Residues 1199–1232 (DSDEYDDLREEDVEPDLEELSLDDLDLDDFGDEH) are compositionally biased toward acidic residues.

This sequence belongs to the RNA polymerase beta chain family. The RNAP catalytic core consists of 2 alpha, 1 beta, 1 beta' and 1 omega subunit. When a sigma factor is associated with the core the holoenzyme is formed, which can initiate transcription.

It catalyses the reaction RNA(n) + a ribonucleoside 5'-triphosphate = RNA(n+1) + diphosphate. DNA-dependent RNA polymerase catalyzes the transcription of DNA into RNA using the four ribonucleoside triphosphates as substrates. The sequence is that of DNA-directed RNA polymerase subunit beta from Clostridium botulinum (strain Kyoto / Type A2).